The primary structure comprises 212 residues: MARKRKSRNNSKIGHGAISRIGRPNNPFEPCRNRYAQKYLTLALMGGAAFFVLKGCSDSSDVDNDGDGTFYATVQDCIDDGNNADICARGWNNAKTAFYADVPKNMTQQNCQSKYENCYYDNVEQSWIPVVSGFLLSRVIRKDRDEPFVYNSGGSSFASRPVWRSTSGDYSWRSGSGKKESYSSGGFTTKKASTVSRGGYGRSSSARGHWGG.

2 disordered regions span residues 1–25 (MARKRKSRNNSKIGHGAISRIGRPN) and 165–212 (STSG…HWGG). The span at 202–212 (RSSSARGHWGG) shows a compositional bias: low complexity.

This is an uncharacterized protein from Escherichia coli (strain K12).